The chain runs to 204 residues: Small ribosomal subunit protein uS7 (204 aa).

The protein belongs to the universal ribosomal protein uS7 family. As to quaternary structure, part of the 30S ribosomal subunit.

In terms of biological role, one of the primary rRNA binding proteins, it binds directly to 16S rRNA where it nucleates assembly of the head domain of the 30S subunit. Is located at the subunit interface close to the decoding center. This is Small ribosomal subunit protein uS7 from Methanoregula boonei (strain DSM 21154 / JCM 14090 / 6A8).